Reading from the N-terminus, the 326-residue chain is Holliday junction branch migration complex subunit RuvB (326 aa).

The large ATPase domain (RuvB-L) stretch occupies residues 1–180 (MRSISCSKEY…FGIPLRLEFY (180 aa)). ATP contacts are provided by residues Ile-19, Arg-20, Gly-61, Lys-64, Thr-65, Thr-66, 127–129 (EDF), Arg-170, Tyr-180, and Arg-217. Thr-65 contributes to the Mg(2+) binding site. The tract at residues 181 to 251 (SFEELVDIIK…IADSALSKLG (71 aa)) is small ATPAse domain (RuvB-S). Residues 254–326 (KMGLNKLDVD…QGKEYLSLQY (73 aa)) are head domain (RuvB-H). Arg-307 and Arg-312 together coordinate DNA.

Belongs to the RuvB family. Homohexamer. Forms an RuvA(8)-RuvB(12)-Holliday junction (HJ) complex. HJ DNA is sandwiched between 2 RuvA tetramers; dsDNA enters through RuvA and exits via RuvB. An RuvB hexamer assembles on each DNA strand where it exits the tetramer. Each RuvB hexamer is contacted by two RuvA subunits (via domain III) on 2 adjacent RuvB subunits; this complex drives branch migration. In the full resolvosome a probable DNA-RuvA(4)-RuvB(12)-RuvC(2) complex forms which resolves the HJ.

Its subcellular location is the cytoplasm. The catalysed reaction is ATP + H2O = ADP + phosphate + H(+). The RuvA-RuvB-RuvC complex processes Holliday junction (HJ) DNA during genetic recombination and DNA repair, while the RuvA-RuvB complex plays an important role in the rescue of blocked DNA replication forks via replication fork reversal (RFR). RuvA specifically binds to HJ cruciform DNA, conferring on it an open structure. The RuvB hexamer acts as an ATP-dependent pump, pulling dsDNA into and through the RuvAB complex. RuvB forms 2 homohexamers on either side of HJ DNA bound by 1 or 2 RuvA tetramers; 4 subunits per hexamer contact DNA at a time. Coordinated motions by a converter formed by DNA-disengaged RuvB subunits stimulates ATP hydrolysis and nucleotide exchange. Immobilization of the converter enables RuvB to convert the ATP-contained energy into a lever motion, pulling 2 nucleotides of DNA out of the RuvA tetramer per ATP hydrolyzed, thus driving DNA branch migration. The RuvB motors rotate together with the DNA substrate, which together with the progressing nucleotide cycle form the mechanistic basis for DNA recombination by continuous HJ branch migration. Branch migration allows RuvC to scan DNA until it finds its consensus sequence, where it cleaves and resolves cruciform DNA. This chain is Holliday junction branch migration complex subunit RuvB, found in Wolbachia sp. subsp. Brugia malayi (strain TRS).